The chain runs to 335 residues: Transcriptional coactivator YAP1-B (335 aa).

Low complexity predominate over residues 1–13 (MEPGSQQQPSAPG). A disordered region spans residues 1–21 (MEPGSQQQPSAPGQQPPPVGH). Residue S30 is modified to Phosphoserine; by LATS1 and LATS2. Over residues 114 to 124 (MNQQRLSQSAP) the composition is skewed to polar residues. The segment at 114–146 (MNQQRLSQSAPVKSPPALQPQSPPSGVLGSGGN) is disordered. The segment covering 126-136 (KSPPALQPQSP) has biased composition (pro residues). Positions 137 to 335 (PSGVLGSGGN…LDKESFLTWL (199 aa)) are transactivation domain. A coiled-coil region spans residues 145 to 173 (GNQQMRLQQLQMEKERLRLKHQELLRQVR).

Belongs to the YAP1 family. In terms of processing, phosphorylated by lats1 and lats2; leading to cytoplasmic translocation and inactivation.

Its subcellular location is the cytoplasm. It is found in the nucleus. It localises to the cell junction. The protein resides in the tight junction. The protein localises to the cell membrane. Its function is as follows. Transcriptional regulator which can act both as a coactivator and a corepressor and is the critical downstream regulatory target in the Hippo signaling pathway that plays a pivotal role in organ size control and tumor suppression by restricting proliferation and promoting apoptosis. Plays a key role in tissue tension and 3D tissue shape by regulating cortical actomyosin network formation. This is Transcriptional coactivator YAP1-B from Xenopus laevis (African clawed frog).